The following is a 1430-amino-acid chain: MGKEQELVQAVKAEDVGTAQRLLQRPRPGKAKLLGSTKKINVNFQDPDGFSALHHAALNGNTELISLLLEAQAAVDIKDNKGMRPLHYAAWQGRKEPMKLVLKAGSAVNVPSDEGHIPLHLAAQHGHYDVSEMLLQHQSNPCIVDNSGKTPLDLACEFGRVGVVQLLLSSNMCAALLEPRPGDTTDPNGTSPLHLAAKNGHIDIIRLLLQAGIDINRQTKSGTALHEAALCGKTEVVRLLLDSGINAQVRNTYSQTALDIVHQFTTSQASKEIKQLLREASAALQVRATKDYCNNYDLTSLNVKAGDIITVLEQHPDGRWKGCIHDNRTGNDRVGYFPSSLGEAIVKRAGSRTGSEPSPPQGGGSLGPSAPPEEIWVLRKPFAGGDRSGSLSNVAGGRSTGGHALHAGAEGVKLLATVLSQKSVSESSPGDSPVKPPEGSSGAARSQPPAAHAGQVYGEQPPKKLESSSASEGKSAEAVSQWLATFQLQLYAPNFTSAGYDLPTISRMTPEDLTAIGVTKPGHRKKITAEISGLNIPDCLPEHKPANLAVWLSMIGLAQYYKVLVDNGYENIDFITDITWEDLQEIGITKLGHQKKLMLAVRKLAELQKAEYSKYEGGPLRRKAPQSLEMMAIESPPPSEPAAAECQSPKMTTFQDSELSGELQAALSGPAEAGAAAAEKSSNHLPATPRTTSRQESSLSGRARHMSSSQELLGDGPQGPGSPMSRSQEYLLDEGPAPGTPPKEVRSSRHGHSVKRASVPPVPGKPRQVLPSGVSHFTPPQTPTKAQPGSPQALGGPHGPATAKVKPTPQLLPPTDRPMSPRSLPQSPTHRGFAYVLPQPVEGEAGPPAPGPVPPPVPAAVPTLCLPPEADVEPRRPKKRAHSLNRYAASDSEPERDELLVPAAAGPYATVQRRVGRSHSVRAPAGTDKNVNRSQSFAVRPRKKGPPPPPPKRSSSAMASANLADEPSPDVETEDGRLGVRAQRRRASDLAGSVDTGSAGSVKSIAAMLELSSIGGGGRAIRRPPEGHPTPRPASPDPGRVATVLASVKHKEAIGPDGEVVNRRRTLSGPVTGLLATARRGPGEPAEQSHFMEDGTARQRLRGPAKGEAGVEGPPLARVEASATLKRRIRAKQSQQENVKFILTESDTVKRRPKAKEPDIGPEPPPPLSVYQNGTATIRRRPASEQAGPPELPPPPPPAEPPPTDLMPLPPLPLPDGSARKPVKPPVSPKPILAQPVSKIQGSPTPASKKVPLPGPGSPEVKRAHGTPPPVSPKPPPPPTAPKPAKALAGLQSSSATPSPVPSPARQPPAALIKPASSPPSQSASPAKPPSPGAPALQVPTKPPRAAASVVSGPPVASDCASPGDSARQKLEETSACLAAALQAVEEKIRQEDGQGPRPSSIEEKSTGSILEDIGSMFDDLADQLDAMLE.

6 ANK repeats span residues 48 to 77, 81 to 110, 114 to 143, 147 to 176, 188 to 217, and 220 to 249; these read DGFS…AVDI, KGMR…AVNV, EGHI…NPCI, SGKT…CAAL, NGTS…DINR, and KSGT…NAQV. Tyrosine 253 carries the phosphotyrosine modification. One can recognise an SH3 domain in the interval 281–347; the sequence is SAALQVRATK…PSSLGEAIVK (67 aa). The interval 348-372 is disordered; that stretch reads RAGSRTGSEPSPPQGGGSLGPSAPP. Residue serine 358 is modified to Phosphoserine. The tract at residues 375 to 471 is CASK-binding; that stretch reads IWVLRKPFAG…PKKLESSSAS (97 aa). Arginine 398 bears the Omega-N-methylarginine mark. A compositionally biased stretch (polar residues) spans 421 to 430; the sequence is QKSVSESSPG. The interval 421–472 is disordered; the sequence is QKSVSESSPGDSPVKPPEGSSGAARSQPPAAHAGQVYGEQPPKKLESSSASE. Residues serine 423 and serine 432 each carry the phosphoserine modification. 2 consecutive SAM domains span residues 474-537 and 543-607; these read KSAE…LNIP and HKPA…LAEL. Phosphoserine is present on residues serine 635 and serine 648. A compositionally biased stretch (low complexity) spans 667–679; sequence LSGPAEAGAAAAE. 4 disordered regions span residues 667–1001, 1015–1040, 1055–1371, and 1388–1407; these read LSGP…SAGS, GGGG…DPGR, GPDG…RQKL, and KIRQ…EKST. Residues 683–711 show a composition bias toward polar residues; that stretch reads NHLPATPRTTSRQESSLSGRARHMSSSQE. Residues serine 722 and serine 727 each carry the phosphoserine modification. Threonine 740 bears the Phosphothreonine mark. Serine 790 is subject to Phosphoserine. A compositionally biased stretch (pro residues) spans 847 to 859; that stretch reads PPAPGPVPPPVPA. Residues serine 890, serine 892, and serine 988 each carry the phosphoserine modification. Residues 1027 to 1036 are compositionally biased toward pro residues; sequence GHPTPRPASP. Position 1066 is a phosphothreonine (threonine 1066). Serine 1068 carries the post-translational modification Phosphoserine. Residues 1147–1159 are compositionally biased toward basic and acidic residues; it reads DTVKRRPKAKEPD. Over residues 1190-1214 the composition is skewed to pro residues; it reads PELPPPPPPAEPPPTDLMPLPPLPL. Serine 1258 is subject to Phosphoserine. Threonine 1267 bears the Phosphothreonine mark. The segment covering 1267-1282 has biased composition (pro residues); that stretch reads TPPPVSPKPPPPPTAP. Low complexity-rich tracts occupy residues 1283 to 1298, 1308 to 1326, and 1344 to 1358; these read KPAK…SATP, PPAA…SASP, and PRAA…PVAS. Residue serine 1362 is modified to Phosphoserine. A compositionally biased stretch (basic and acidic residues) spans 1388-1406; the sequence is KIRQEDGQGPRPSSIEEKS.

Polymerizes, via the tandem SAM domains, to form long, 8 nM wide fibers, upon which other proteins can assemble. Binds the CaM kinase domain of CASK. Forms a ternary complex with CASK and LIN7A, LIN7B or LIN7C. Competes with APBA1 that forms a similar complex with CASK and LIN7 proteins. The tripartite complex CASKIN1/CASK/LIN7(A/B/C) binds the cytoplasmic tail of NRXN1. As to expression, expressed in brain. Localized primarily to the neuropil and enriched in synaptic areas (at protein level).

The protein resides in the cytoplasm. Its function is as follows. May link the scaffolding protein CASK to downstream intracellular effectors. The sequence is that of Caskin-1 (Caskin1) from Rattus norvegicus (Rat).